Reading from the N-terminus, the 345-residue chain is Fructose-1,6-bisphosphatase class 1 (345 aa).

Mg(2+)-binding residues include E90, D109, L111, and D112. Substrate-binding positions include 112 to 115 (DGSS) and N199. Position 271 (E271) interacts with Mg(2+).

The protein belongs to the FBPase class 1 family. In terms of assembly, homotetramer. Mg(2+) is required as a cofactor.

The protein resides in the cytoplasm. The catalysed reaction is beta-D-fructose 1,6-bisphosphate + H2O = beta-D-fructose 6-phosphate + phosphate. The protein operates within carbohydrate biosynthesis; Calvin cycle. The polypeptide is Fructose-1,6-bisphosphatase class 1 (Rhodopseudomonas palustris (strain BisB5)).